Consider the following 396-residue polypeptide: ATP-dependent RNA helicase eIF4A (396 aa).

A Q motif motif is present at residues 22-50; sequence YSFDDLNLKPNIVRGIFGYGYESPSAIQQ. One can recognise a Helicase ATP-binding domain in the interval 53 to 223; sequence ILPITEGRDV…TKFMNNPVRI (171 aa). Position 66-73 (66-73) interacts with ATP; the sequence is AQSGTGKT. The DEAD box motif lies at 171-174; that stretch reads DEAD. Residues 234 to 395 enclose the Helicase C-terminal domain; sequence GIKQFYINVE…EMPANIGELF (162 aa).

It belongs to the DEAD box helicase family. eIF4A subfamily. In terms of assembly, component of the eIF4F complex, which composition varies with external and internal environmental conditions. It is composed of at least eIF4A, eIF4E and eIF4G.

The protein resides in the cytoplasm. The catalysed reaction is ATP + H2O = ADP + phosphate + H(+). Its function is as follows. ATP-dependent RNA helicase which is a subunit of the eIF4F complex involved in cap recognition and is required for mRNA binding to ribosome. In the current model of translation initiation, eIF4A unwinds RNA secondary structures in the 5'-UTR of mRNAs which is necessary to allow efficient binding of the small ribosomal subunit, and subsequent scanning for the initiator codon. In Meyerozyma guilliermondii (strain ATCC 6260 / CBS 566 / DSM 6381 / JCM 1539 / NBRC 10279 / NRRL Y-324) (Yeast), this protein is ATP-dependent RNA helicase eIF4A (TIF1).